The primary structure comprises 358 residues: Naringenin,2-oxoglutarate 3-dioxygenase (358 aa).

The Fe2OG dioxygenase domain occupies 190-294 (CVDMDQKIVV…RLSIATFQNP (105 aa)). Positions 217, 219, and 275 each coordinate Fe cation. Arginine 285 lines the 2-oxoglutarate pocket.

Belongs to the iron/ascorbate-dependent oxidoreductase family. Interacts with Dihydroflavonol-4-reductase (TT3), chalcone synthase (TT4) and chalcone isomerase (TT5) to form a flavonoid enzyme complex. The cofactor is Fe(2+). L-ascorbate serves as cofactor.

The enzyme catalyses a (2S)-flavan-4-one + 2-oxoglutarate + O2 = a (2R,3R)-dihydroflavonol + succinate + CO2. It participates in secondary metabolite biosynthesis; flavonoid biosynthesis. Catalyzes the 3-beta-hydroxylation of 2S-flavanones to 2R,3R-dihydroflavonols which are intermediates in the biosynthesis of flavonols, anthocyanidins, catechins and proanthocyanidins in plants. The chain is Naringenin,2-oxoglutarate 3-dioxygenase (F3H) from Arabidopsis thaliana (Mouse-ear cress).